Here is a 447-residue protein sequence, read N- to C-terminus: Phosphoglucosamine mutase (447 aa).

Ser101 (phosphoserine intermediate) is an active-site residue. Mg(2+)-binding residues include Ser101, Asp242, Asp244, and Asp246. Residue Ser101 is modified to Phosphoserine.

It belongs to the phosphohexose mutase family. Requires Mg(2+) as cofactor. In terms of processing, activated by phosphorylation.

The catalysed reaction is alpha-D-glucosamine 1-phosphate = D-glucosamine 6-phosphate. Its function is as follows. Catalyzes the conversion of glucosamine-6-phosphate to glucosamine-1-phosphate. The chain is Phosphoglucosamine mutase from Bradyrhizobium diazoefficiens (strain JCM 10833 / BCRC 13528 / IAM 13628 / NBRC 14792 / USDA 110).